Reading from the N-terminus, the 287-residue chain is Co-chaperone protein DjlA (287 aa).

Residues 1-6 lie on the Periplasmic side of the membrane; sequence MNFIGK. The helical transmembrane segment at 7–30 threads the bilayer; that stretch reads FLGLIIGWKLGGFFGAICGVILGH. The Cytoplasmic segment spans residues 31–287; the sequence is LGDKKLYELG…DLICKTKGWK (257 aa). One can recognise a J domain in the interval 221–287; that stretch reads DAYKVLGVSA…DLICKTKGWK (67 aa).

In terms of assembly, homodimer.

It is found in the cell inner membrane. Its function is as follows. Regulatory DnaK co-chaperone. Direct interaction between DnaK and DjlA is needed for the induction of the wcaABCDE operon, involved in the synthesis of a colanic acid polysaccharide capsule, possibly through activation of the RcsB/RcsC phosphotransfer signaling pathway. The colanic acid capsule may help the bacterium survive conditions outside the host. The chain is Co-chaperone protein DjlA from Pasteurella multocida (strain Pm70).